Here is a 125-residue protein sequence, read N- to C-terminus: Small ribosomal subunit protein uS13 (125 aa).

Positions 90–125 are disordered; that stretch reads QRHRKGLPVRGQRTKTNARTRKGPKRTVAGKKKATK.

This sequence belongs to the universal ribosomal protein uS13 family. Part of the 30S ribosomal subunit. Forms a loose heterodimer with protein S19. Forms two bridges to the 50S subunit in the 70S ribosome.

Located at the top of the head of the 30S subunit, it contacts several helices of the 16S rRNA. In the 70S ribosome it contacts the 23S rRNA (bridge B1a) and protein L5 of the 50S subunit (bridge B1b), connecting the 2 subunits; these bridges are implicated in subunit movement. Contacts the tRNAs in the A and P-sites. The chain is Small ribosomal subunit protein uS13 from Bifidobacterium longum subsp. infantis (strain ATCC 15697 / DSM 20088 / JCM 1222 / NCTC 11817 / S12).